We begin with the raw amino-acid sequence, 662 residues long: UvrABC system protein B (662 aa).

The region spanning 31–188 (DNIEGGEKAQ…NDLVDIQFER (158 aa)) is the Helicase ATP-binding domain. 44-51 (GATGTGKT) contributes to the ATP binding site. A Beta-hairpin motif is present at residues 97–120 (YYDYYQPEAYVPSSDTYIEKDSSV). Residues 435-601 (QIDDLLGEIN…TIKKEIRDLI (167 aa)) enclose the Helicase C-terminal domain. The UVR domain maps to 626–661 (KELVKKLEKQMQEAVEVLDFELAAQIRDMMLEVKAL).

The protein belongs to the UvrB family. In terms of assembly, forms a heterotetramer with UvrA during the search for lesions. Interacts with UvrC in an incision complex.

The protein resides in the cytoplasm. In terms of biological role, the UvrABC repair system catalyzes the recognition and processing of DNA lesions. A damage recognition complex composed of 2 UvrA and 2 UvrB subunits scans DNA for abnormalities. Upon binding of the UvrA(2)B(2) complex to a putative damaged site, the DNA wraps around one UvrB monomer. DNA wrap is dependent on ATP binding by UvrB and probably causes local melting of the DNA helix, facilitating insertion of UvrB beta-hairpin between the DNA strands. Then UvrB probes one DNA strand for the presence of a lesion. If a lesion is found the UvrA subunits dissociate and the UvrB-DNA preincision complex is formed. This complex is subsequently bound by UvrC and the second UvrB is released. If no lesion is found, the DNA wraps around the other UvrB subunit that will check the other stand for damage. This chain is UvrABC system protein B, found in Streptococcus pneumoniae (strain ATCC 700669 / Spain 23F-1).